A 370-amino-acid polypeptide reads, in one-letter code: UDP-3-O-acylglucosamine N-acyltransferase (370 aa).

His-252 functions as the Proton acceptor in the catalytic mechanism. The tract at residues 348 to 370 (NAAAEKRDGPAPNAASKATGDKV) is disordered.

It belongs to the transferase hexapeptide repeat family. LpxD subfamily. As to quaternary structure, homotrimer.

The catalysed reaction is a UDP-3-O-[(3R)-3-hydroxyacyl]-alpha-D-glucosamine + a (3R)-hydroxyacyl-[ACP] = a UDP-2-N,3-O-bis[(3R)-3-hydroxyacyl]-alpha-D-glucosamine + holo-[ACP] + H(+). It participates in bacterial outer membrane biogenesis; LPS lipid A biosynthesis. Its function is as follows. Catalyzes the N-acylation of UDP-3-O-acylglucosamine using 3-hydroxyacyl-ACP as the acyl donor. Is involved in the biosynthesis of lipid A, a phosphorylated glycolipid that anchors the lipopolysaccharide to the outer membrane of the cell. This chain is UDP-3-O-acylglucosamine N-acyltransferase, found in Paraburkholderia phytofirmans (strain DSM 17436 / LMG 22146 / PsJN) (Burkholderia phytofirmans).